The following is a 298-amino-acid chain: Porphobilinogen deaminase (298 aa).

Position 239 is an S-(dipyrrolylmethanemethyl)cysteine (C239).

The protein belongs to the HMBS family. In terms of assembly, monomer. The cofactor is dipyrromethane.

It catalyses the reaction 4 porphobilinogen + H2O = hydroxymethylbilane + 4 NH4(+). The protein operates within porphyrin-containing compound metabolism; protoporphyrin-IX biosynthesis; coproporphyrinogen-III from 5-aminolevulinate: step 2/4. In terms of biological role, tetrapolymerization of the monopyrrole PBG into the hydroxymethylbilane pre-uroporphyrinogen in several discrete steps. The protein is Porphobilinogen deaminase of Ehrlichia canis (strain Jake).